We begin with the raw amino-acid sequence, 877 residues long: MNLRSRLVNATERAVLFQIFKDVQNDPEKYDNAVEAICESIDYFGKFLTDSEYLTQIKPILDTQCPTKSIICFSKCLTKVSTDINTTTFRDVITMLDWLKYVVEKSLTSAICSSLKVKETDVSAVQLYREFASACSNIPEKVSNCCAKALSGEHVKYINTVKWIFKMNLVQGIQKAMLLAHDDIVTAAPFTSFYGSGGPYMKTVAEIISSGRNIDITNKDGLLVQMIEWIGSLNNFDSQWRRMMFLIFQEPTYQGIQVHESLLTTLFLISKSDQILKRCIEATDLTGTLKRVVMVKLPFQRVLKRKTIEILINFVYRTKEQFAIQLLETSVKIWSDLNYAKSAPESQERHIVRMILYLVHLFRTCSSIDWESLFLNSMDGVHCRMSMLPMYVQSGIFVNQALCKQATKHRSKTHGSDEQPPETLEENKFVSSEVGKIWFEEMTSILEHGFNSSTVKDSERVRETANEITKDDSGEEFEETNAQRLQNNKDSAAITSKNNLRLDSDDDEDFPDYQVNESEKIFKNLEIGEEPKNKVTPPAYIADAFEMLLEKEKYEVFEAAFFNITNLINRRPIGFPQIAEKLFIRILHLQNNFGTPKFKETVDEIAVACITQRPEIVPSVVRLIIAPGQGFSIKQRLLHYIHNAADGMGALDKKLEECVMAQQLRIGGPTLSIILHRTINTDYDDEDEDPHRLLVPEWRRMVDARIAANTRRIGTTREPPRAGVVNRLAQAAKYMFYPLLVLPRGENASLLGKDSDLLASLIMVASMVYVRCGVCPQIHRMSSELISYATPHRFSENAKLRTACIIAHLNVTTLLPGDLMDELFDVPALIGWFDWANSVLVNASSSQLEKDMTRQFGHSVTKHLQRYHPAVLQHQDV.

The segment covering 488–501 (NKDSAAITSKNNLR) has biased composition (polar residues). The interval 488-509 (NKDSAAITSKNNLRLDSDDDED) is disordered.

The protein belongs to the TEL2 family.

The protein localises to the nucleus. Its subcellular location is the chromosome. The protein resides in the telomere. Functionally, DNA damage checkpoint protein required for DNA damage-induced cell cycle arrest and apoptosis, thereby playing a role in genome stability. Regulator of telomere length. This chain is Telomere length regulation protein clk-2 (clk-2), found in Caenorhabditis elegans.